A 321-amino-acid polypeptide reads, in one-letter code: MQNRKTYDDWVKKWITQSISVLIMIDIMTRTSIANAYPIFAQQAYENPREATGRIVCANCHLAKKPVEIEVPQSVLPDTVFEAVVKIPYDKQIKQVLANGKKGTLNVGAVLILPEGFELAPPDRIYPEIKEKIGDLYFQNYRPNQKNILIIGPVPGQKYSEIVFPILSPNPATNKAAHFLKYPIYVGGNRGRGQIYPDGSKSNNTVYNASATGKVSKIVRKEKGGYQITIDNPSDGRQVVDFVPPGPELLVSEGEFIKADQSLTNNPNVGGFGQENAEIVLQDPLRVQGLLLFLASVVLAQIFLVLKKKQFEKVQLVEMNF.

A signal peptide spans 1 to 35; that stretch reads MQNRKTYDDWVKKWITQSISVLIMIDIMTRTSIAN. Positions 37, 57, 60, and 61 each coordinate heme. The helical transmembrane segment at 287–307 threads the bilayer; that stretch reads VQGLLLFLASVVLAQIFLVLK.

The protein belongs to the cytochrome f family. As to quaternary structure, the 4 large subunits of the cytochrome b6-f complex are cytochrome b6, subunit IV (17 kDa polypeptide, petD), cytochrome f and the Rieske protein, while the 4 small subunits are PetG, PetL, PetM and PetN. The complex functions as a dimer. It depends on heme as a cofactor.

The protein localises to the plastid. Its subcellular location is the chloroplast thylakoid membrane. Component of the cytochrome b6-f complex, which mediates electron transfer between photosystem II (PSII) and photosystem I (PSI), cyclic electron flow around PSI, and state transitions. This is Cytochrome f from Cryptomeria japonica (Japanese cedar).